The following is a 477-amino-acid chain: Cytochrome P450 708A2 (477 aa).

The chain crosses the membrane as a helical span at residues 3–23 (FVWSAAVWVIAVAAVVISKWL). A heme-binding site is contributed by cysteine 426.

This sequence belongs to the cytochrome P450 family. Heme is required as a cofactor. As to expression, expressed primarily in the root epidermis.

Its subcellular location is the membrane. Its function is as follows. Hydroxylates thalianol into thalian-diol. The sequence is that of Cytochrome P450 708A2 (CYP708A2) from Arabidopsis thaliana (Mouse-ear cress).